The primary structure comprises 262 residues: Eukaryotic translation initiation factor 3 subunit G (262 aa).

The RRM domain maps to 182–260; that stretch reads NTCRVTNLPQ…MVLKVEWTRP (79 aa).

The protein belongs to the eIF-3 subunit G family. In terms of assembly, component of the eukaryotic translation initiation factor 3 (eIF-3) complex.

Its subcellular location is the cytoplasm. Functionally, RNA-binding component of the eukaryotic translation initiation factor 3 (eIF-3) complex, which is involved in protein synthesis of a specialized repertoire of mRNAs and, together with other initiation factors, stimulates binding of mRNA and methionyl-tRNAi to the 40S ribosome. The eIF-3 complex specifically targets and initiates translation of a subset of mRNAs involved in cell proliferation. This subunit can bind 18S rRNA. Binds to GC-rich 5'UTRs in cholinergic motor neurons, thereby may play a role in translational regulation of mRNAs involved in neuropeptide signaling and stress response, including hlh-30 isoform d and ncs-2. In Caenorhabditis elegans, this protein is Eukaryotic translation initiation factor 3 subunit G.